A 279-amino-acid chain; its full sequence is Bis(5'-nucleosyl)-tetraphosphatase, symmetrical (279 aa).

This sequence belongs to the Ap4A hydrolase family.

It catalyses the reaction P(1),P(4)-bis(5'-adenosyl) tetraphosphate + H2O = 2 ADP + 2 H(+). Hydrolyzes diadenosine 5',5'''-P1,P4-tetraphosphate to yield ADP. The chain is Bis(5'-nucleosyl)-tetraphosphatase, symmetrical from Edwardsiella ictaluri (strain 93-146).